A 254-amino-acid polypeptide reads, in one-letter code: N-acetylglucosaminyldiphosphoundecaprenol N-acetyl-beta-D-mannosaminyltransferase (254 aa).

It belongs to the glycosyltransferase 26 family. TagA/TarA subfamily.

The enzyme catalyses UDP-N-acetyl-alpha-D-mannosamine + N-acetyl-alpha-D-glucosaminyl-di-trans,octa-cis-undecaprenyl diphosphate = N-acetyl-beta-D-mannosaminyl-(1-&gt;4)-N-acetyl-alpha-D-glucosaminyl di-trans,octa-cis-undecaprenyl diphosphate + UDP + H(+). It participates in cell wall biogenesis; poly(ribitol phosphate) teichoic acid biosynthesis. Its function is as follows. Catalyzes the conversion of GlcNAc-PP-undecaprenol into ManNAc-GlcNAc-PP-undecaprenol, the first committed lipid intermediate in the de novo synthesis of teichoic acid. The sequence is that of N-acetylglucosaminyldiphosphoundecaprenol N-acetyl-beta-D-mannosaminyltransferase from Staphylococcus aureus (strain NCTC 8325 / PS 47).